The primary structure comprises 333 residues: tRNA N6-adenosine threonylcarbamoyltransferase (333 aa).

Residues His111 and His115 each coordinate Fe cation. Residues 134 to 138, Asp167, Gly180, Asp184, and Asn269 each bind substrate; that span reads VVSGG. Asp297 is a Fe cation binding site.

Belongs to the KAE1 / TsaD family. The cofactor is Fe(2+).

The protein resides in the cytoplasm. The enzyme catalyses L-threonylcarbamoyladenylate + adenosine(37) in tRNA = N(6)-L-threonylcarbamoyladenosine(37) in tRNA + AMP + H(+). In terms of biological role, required for the formation of a threonylcarbamoyl group on adenosine at position 37 (t(6)A37) in tRNAs that read codons beginning with adenine. Is involved in the transfer of the threonylcarbamoyl moiety of threonylcarbamoyl-AMP (TC-AMP) to the N6 group of A37, together with TsaE and TsaB. TsaD likely plays a direct catalytic role in this reaction. The sequence is that of tRNA N6-adenosine threonylcarbamoyltransferase from Carboxydothermus hydrogenoformans (strain ATCC BAA-161 / DSM 6008 / Z-2901).